Consider the following 58-residue polypeptide: Putative antitoxin VapB16 (58 aa).

In terms of biological role, putative antitoxin component of a possible type II toxin-antitoxin (TA) system. The cognate toxin is VapC16. The polypeptide is Putative antitoxin VapB16 (vapB16) (Mycobacterium tuberculosis (strain ATCC 25618 / H37Rv)).